The following is an 805-amino-acid chain: Mediator of RNA polymerase II transcription subunit 25 (805 aa).

2 disordered regions span residues 308–332 (NQMPPTSAVGTPFNQPPPPAMPQNT) and 647–691 (QQPQ…NPQL). A compositionally biased stretch (low complexity) spans 647–678 (QQPQQAASQAPPQATQTTVQAPGQPQNPQPGA). The short motif at 691 to 695 (LRNLL) is the LXXLL motif element.

The protein belongs to the Mediator complex subunit 25 family. Component of the Mediator complex.

The protein resides in the nucleus. Its function is as follows. Component of the Mediator complex, a coactivator involved in the regulated transcription of nearly all RNA polymerase II-dependent genes. Mediator functions as a bridge to convey information from gene-specific regulatory proteins to the basal RNA polymerase II transcription machinery. Mediator is recruited to promoters by direct interactions with regulatory proteins and serves as a scaffold for the assembly of a functional preinitiation complex with RNA polymerase II and the general transcription factors. This chain is Mediator of RNA polymerase II transcription subunit 25 (med25), found in Xenopus tropicalis (Western clawed frog).